The sequence spans 399 residues: Alpha-ketoglutarate-dependent dioxygenase fc-dox (399 aa).

Fe cation-binding residues include His-158 and Asp-160. 2-oxoglutarate is bound at residue Thr-203. His-355 contributes to the Fe cation binding site. Residue Arg-367 participates in 2-oxoglutarate binding. The segment at 371–399 is disordered; the sequence is QGWLAGDRPPKGPVPIPDPRARSSIYYQK.

Belongs to the TfdA dioxygenase family. It depends on Fe(2+) as a cofactor.

Its pathway is mycotoxin biosynthesis. Functionally, alpha-ketoglutarate-dependent dioxygenase; part of the 2 gene clusters that mediate the biosynthesis of fusicoccins, diterpene glucosides that display phytohormone-like activity and function as potent activators of plasma membrane H(+)-ATPases in plants by modifying 14-3-3 proteins and cause the plant disease constriction canker. The first step in the pathway is performed by the fusicoccadiene synthase PaFS that possesses both prenyl transferase and terpene cyclase activity, converting isopentenyl diphosphate and dimethylallyl diphosphate into geranylgeranyl diphosphate (GGDP) and successively converting GGDP into fusicocca-2,10(14)-diene, a precursor for fusicoccin H. The second step is the oxidation at the C-8 position by the cytochrome P450 monooxygenase PaP450-2 to yield fusicocca-2,10(14)-diene-8-beta-ol. The cytochrome P450 monooxygenase PaP450-1 then catalyzes the hydroxylation at the C-16 position to produce fusicocca-2,10(14)-diene-8-beta,16-diol. The dioxygenase fc-dox then catalyzes the 16-oxydation of fusicocca-2,10(14)-diene-8-beta,16-diol to yield an aldehyde (8-beta-hydroxyfusicocca-1,10(14)-dien-16-al). The short-chain dehydrogenase/reductase fc-sdr catalyzes the reduction of the aldehyde to yield fusicocca-1,10(14)-diene-8-beta,16-diol. The next step is the hydroxylation at C-9 performed by the cytochrome P450 monooxygenase PaP450-3 that leads to fusicoccin H aglycon which is glycosylated to fusicoccin H by the O-glycosyltransferase PaGT. Hydroxylation at C-12 by the cytochrome P450 monooxygenase PaP450-4 leads then to the production of fusicoccin Q and is followed by methylation by the O-methyltransferase PaMT to yield fusicoccin P. Fusicoccin P is further converted to fusicoccin J via prenylation by the O-glucose prenyltransferase PaPT. Cytochrome P450 monooxygenase PaP450-5 then performs hydroxylation at C-19 to yield dideacetyl-fusicoccin A which is acetylated to 3'-O-deacetyl-fusicoccin A by the O-acetyltransferase PaAT-2. Finally, a another acetylation by the O-acetyltransferase PaAT-1 yields fusicoccin A. This Phomopsis amygdali (Fusicoccum amygdali) protein is Alpha-ketoglutarate-dependent dioxygenase fc-dox.